The following is a 325-amino-acid chain: Tetraacyldisaccharide 4'-kinase (325 aa).

55 to 62 contacts ATP; that stretch reads TAGGNGKT.

This sequence belongs to the LpxK family.

The catalysed reaction is a lipid A disaccharide + ATP = a lipid IVA + ADP + H(+). It participates in glycolipid biosynthesis; lipid IV(A) biosynthesis; lipid IV(A) from (3R)-3-hydroxytetradecanoyl-[acyl-carrier-protein] and UDP-N-acetyl-alpha-D-glucosamine: step 6/6. Transfers the gamma-phosphate of ATP to the 4'-position of a tetraacyldisaccharide 1-phosphate intermediate (termed DS-1-P) to form tetraacyldisaccharide 1,4'-bis-phosphate (lipid IVA). The polypeptide is Tetraacyldisaccharide 4'-kinase (Salmonella typhi).